A 98-amino-acid chain; its full sequence is Cytochrome c oxidase assembly protein COX19 (98 aa).

The span at 1 to 10 shows a compositional bias: polar residues; that stretch reads MSGNPGSSLS. Residues 1–25 are disordered; sequence MSGNPGSSLSALRPTPPERGSFPLD. Residues 27–70 form the CHCH domain; that stretch reads DGECTKYMQEYLKCMQLVQNENAMNCRLLAKDYLRCRMDHQLMD. 2 consecutive short sequence motifs (cx9C motif) follow at residues 30–40 and 52–62; these read CTKYMQEYLKC and CRLLAKDYLRC. Intrachain disulfides connect Cys30–Cys62 and Cys40–Cys52. A disordered region spans residues 76–98; that stretch reads HLGLPEDAPGNNGKTIKDATDNK.

The protein belongs to the COX19 family.

It is found in the cytoplasm. Its subcellular location is the mitochondrion intermembrane space. Its function is as follows. Required for the assembly of mitochondrial cytochrome c oxidase. The chain is Cytochrome c oxidase assembly protein COX19 (COX19) from Saccharomyces cerevisiae (strain ATCC 204508 / S288c) (Baker's yeast).